The primary structure comprises 418 residues: Protein YdhQ (418 aa).

The chain is Protein YdhQ (ydhQ) from Escherichia coli (strain K12).